Here is a 65-residue protein sequence, read N- to C-terminus: Large ribosomal subunit protein bL28 (65 aa).

A disordered region spans residues 1–26; it reads MARRDDLTNKGPMSGNKRSHALNATK. Basic residues predominate over residues 17–26; the sequence is KRSHALNATK.

The protein belongs to the bacterial ribosomal protein bL28 family.

This chain is Large ribosomal subunit protein bL28, found in Mycoplasma mobile (strain ATCC 43663 / 163K / NCTC 11711) (Mesomycoplasma mobile).